The chain runs to 199 residues: Chaperone protein TorD (199 aa).

Belongs to the TorD/DmsD family. TorD subfamily.

It localises to the cytoplasm. Its function is as follows. Involved in the biogenesis of TorA. Acts on TorA before the insertion of the molybdenum cofactor and, as a result, probably favors a conformation of the apoenzyme that is competent for acquiring the cofactor. This Escherichia coli O127:H6 (strain E2348/69 / EPEC) protein is Chaperone protein TorD.